Here is a 473-residue protein sequence, read N- to C-terminus: ATP synthase subunit beta (473 aa).

An ATP-binding site is contributed by Gly156–Thr163.

The protein belongs to the ATPase alpha/beta chains family. F-type ATPases have 2 components, CF(1) - the catalytic core - and CF(0) - the membrane proton channel. CF(1) has five subunits: alpha(3), beta(3), gamma(1), delta(1), epsilon(1). CF(0) has three main subunits: a(1), b(2) and c(9-12). The alpha and beta chains form an alternating ring which encloses part of the gamma chain. CF(1) is attached to CF(0) by a central stalk formed by the gamma and epsilon chains, while a peripheral stalk is formed by the delta and b chains.

Its subcellular location is the cell inner membrane. It catalyses the reaction ATP + H2O + 4 H(+)(in) = ADP + phosphate + 5 H(+)(out). In terms of biological role, produces ATP from ADP in the presence of a proton gradient across the membrane. The catalytic sites are hosted primarily by the beta subunits. This Desulfovibrio desulfuricans (strain ATCC 27774 / DSM 6949 / MB) protein is ATP synthase subunit beta.